Reading from the N-terminus, the 346-residue chain is 4-hydroxy-3-methylbut-2-enyl diphosphate reductase (346 aa).

[4Fe-4S] cluster is bound at residue Cys19. Positions 48 and 84 each coordinate (2E)-4-hydroxy-3-methylbut-2-enyl diphosphate. Dimethylallyl diphosphate contacts are provided by His48 and His84. Residues His48 and His84 each contribute to the isopentenyl diphosphate site. Cys106 is a [4Fe-4S] cluster binding site. His134 lines the (2E)-4-hydroxy-3-methylbut-2-enyl diphosphate pocket. His134 contacts dimethylallyl diphosphate. Residue His134 participates in isopentenyl diphosphate binding. Glu136 functions as the Proton donor in the catalytic mechanism. Thr175 is a (2E)-4-hydroxy-3-methylbut-2-enyl diphosphate binding site. Cys205 is a binding site for [4Fe-4S] cluster. The (2E)-4-hydroxy-3-methylbut-2-enyl diphosphate site is built by Ser233, Ser234, Asn235, and Ser278. The dimethylallyl diphosphate site is built by Ser233, Ser234, Asn235, and Ser278. 4 residues coordinate isopentenyl diphosphate: Ser233, Ser234, Asn235, and Ser278.

The protein belongs to the IspH family. [4Fe-4S] cluster serves as cofactor.

It catalyses the reaction isopentenyl diphosphate + 2 oxidized [2Fe-2S]-[ferredoxin] + H2O = (2E)-4-hydroxy-3-methylbut-2-enyl diphosphate + 2 reduced [2Fe-2S]-[ferredoxin] + 2 H(+). The enzyme catalyses dimethylallyl diphosphate + 2 oxidized [2Fe-2S]-[ferredoxin] + H2O = (2E)-4-hydroxy-3-methylbut-2-enyl diphosphate + 2 reduced [2Fe-2S]-[ferredoxin] + 2 H(+). Its pathway is isoprenoid biosynthesis; dimethylallyl diphosphate biosynthesis; dimethylallyl diphosphate from (2E)-4-hydroxy-3-methylbutenyl diphosphate: step 1/1. It participates in isoprenoid biosynthesis; isopentenyl diphosphate biosynthesis via DXP pathway; isopentenyl diphosphate from 1-deoxy-D-xylulose 5-phosphate: step 6/6. Catalyzes the conversion of 1-hydroxy-2-methyl-2-(E)-butenyl 4-diphosphate (HMBPP) into a mixture of isopentenyl diphosphate (IPP) and dimethylallyl diphosphate (DMAPP). Acts in the terminal step of the DOXP/MEP pathway for isoprenoid precursor biosynthesis. The sequence is that of 4-hydroxy-3-methylbut-2-enyl diphosphate reductase from Brucella abortus (strain S19).